The sequence spans 39 residues: Cytochrome b559 subunit beta (39 aa).

A helical membrane pass occupies residues 14–30; sequence WLAVHGLAVPTVFFLGS. His-18 contributes to the heme binding site.

It belongs to the PsbE/PsbF family. In terms of assembly, heterodimer of an alpha subunit and a beta subunit. PSII is composed of 1 copy each of membrane proteins PsbA, PsbB, PsbC, PsbD, PsbE, PsbF, PsbH, PsbI, PsbJ, PsbK, PsbL, PsbM, PsbT, PsbX, PsbY, PsbZ, Psb30/Ycf12, at least 3 peripheral proteins of the oxygen-evolving complex and a large number of cofactors. It forms dimeric complexes. Requires heme b as cofactor.

It is found in the plastid. Its subcellular location is the chloroplast thylakoid membrane. Its function is as follows. This b-type cytochrome is tightly associated with the reaction center of photosystem II (PSII). PSII is a light-driven water:plastoquinone oxidoreductase that uses light energy to abstract electrons from H(2)O, generating O(2) and a proton gradient subsequently used for ATP formation. It consists of a core antenna complex that captures photons, and an electron transfer chain that converts photonic excitation into a charge separation. This chain is Cytochrome b559 subunit beta, found in Pinus koraiensis (Korean pine).